A 100-amino-acid polypeptide reads, in one-letter code: Urease subunit gamma (100 aa).

This sequence belongs to the urease gamma subunit family. In terms of assembly, heterotrimer of UreA (gamma), UreB (beta) and UreC (alpha) subunits. Three heterotrimers associate to form the active enzyme.

It is found in the cytoplasm. It carries out the reaction urea + 2 H2O + H(+) = hydrogencarbonate + 2 NH4(+). It participates in nitrogen metabolism; urea degradation; CO(2) and NH(3) from urea (urease route): step 1/1. The polypeptide is Urease subunit gamma (Rhizobium rhizogenes (strain K84 / ATCC BAA-868) (Agrobacterium radiobacter)).